A 204-amino-acid chain; its full sequence is MTKYTFKPKDFKAFNVEGLDARMEALNEYIRPQLRELGEYFSDFFTSQTGETFYPHVAKHARRSVNPPKDTWVAFATNKRGYKMLPHFQIGMFEDQLFVMFGIMHEAKDKATRAKVFERKFKAIQQLPDDYRVCLDHMKPDKPFIKDLTDDDLIEAIQRAINVKKGEFFIARAITPQDKRLKSDKAFIAFLEETFDQFLPFYSA.

This sequence belongs to the UPF0637 family.

In Staphylococcus aureus (strain USA300 / TCH1516), this protein is UPF0637 protein USA300HOU_1046.1.